A 338-amino-acid polypeptide reads, in one-letter code: Malate dehydrogenase, mitochondrial (338 aa).

Residues 1 to 24 constitute a mitochondrion transit peptide; it reads MLSALARPASAALRRSFSTSAQNN. Residues 31-37 and Asp57 contribute to the NAD(+) site; that span reads GASGGIG. A glycan (O-linked (GlcNAc) serine) is linked at Ser33. An N6-acetyllysine; alternate mark is found at Lys78 and Lys91. An N6-succinyllysine; alternate mark is found at Lys78 and Lys91. Substrate contacts are provided by Arg104 and Arg110. NAD(+)-binding positions include Asn117 and 140 to 142; that span reads IAN. Asn142 provides a ligand contact to substrate. At Lys165 the chain carries N6-acetyllysine. Residue Arg176 coordinates substrate. Position 185 is an N6-acetyllysine; alternate (Lys185). Position 185 is an N6-succinyllysine; alternate (Lys185). The Proton acceptor role is filled by His200. An N6-succinyllysine modification is found at Lys203. 2 positions are modified to N6-acetyllysine; alternate: Lys215 and Lys239. Lys215 and Lys239 each carry N6-succinyllysine; alternate. At Lys239 the chain carries N6-malonyllysine; alternate. Phosphoserine is present on Ser246. Met251 is an NAD(+) binding site. Lys269 is modified (N6-succinyllysine). 4 positions are modified to N6-acetyllysine; alternate: Lys296, Lys301, Lys314, and Lys324. N6-succinyllysine; alternate occurs at positions 296, 301, 314, and 324. The residue at position 326 (Ser326) is a Phosphoserine. 3 positions are modified to N6-acetyllysine; alternate: Lys328, Lys329, and Lys335. Lys328 is modified (N6-succinyllysine; alternate). Lys329 is subject to N6-malonyllysine; alternate. Lys335 bears the N6-succinyllysine; alternate mark.

Belongs to the LDH/MDH superfamily. MDH type 1 family. As to quaternary structure, homodimer. Post-translationally, acetylation is enhanced after treatment either with trichostin A (TCA) or with nicotinamide (NAM) with the appearance of tri- and tetraacetylations. Glucose also increases acetylation.

It is found in the mitochondrion matrix. It catalyses the reaction (S)-malate + NAD(+) = oxaloacetate + NADH + H(+). With respect to regulation, enzyme activity is enhanced by acetylation. This Macaca fascicularis (Crab-eating macaque) protein is Malate dehydrogenase, mitochondrial (MDH2).